Reading from the N-terminus, the 496-residue chain is Cytochrome P450 71D180 (496 aa).

A helical; Signal-anchor for type II membrane protein membrane pass occupies residues 1-21 (MDISISWVVIIVFVLSYLILM). A heme-binding site is contributed by Cys435.

The protein belongs to the cytochrome P450 family. It depends on heme as a cofactor. Mostly expressed in flowers and, to a lower extent, in leaves, especially in glandular trichomes.

It is found in the membrane. It catalyses the reaction (4R)-limonene + reduced [NADPH--hemoprotein reductase] + O2 = (1R,5S)-carveol + oxidized [NADPH--hemoprotein reductase] + H2O + H(+). The enzyme catalyses (4S)-limonene + reduced [NADPH--hemoprotein reductase] + O2 = (1S,5R)-carveol + oxidized [NADPH--hemoprotein reductase] + H2O + H(+). It carries out the reaction gamma-terpinene + 2 reduced [NADPH--hemoprotein reductase] + 2 O2 = carvacrol + 2 oxidized [NADPH--hemoprotein reductase] + 3 H2O + 2 H(+). The protein operates within secondary metabolite biosynthesis; terpenoid biosynthesis. Functionally, involved in the biosynthesis of phenolic monoterpenes natural products thymol and carvacrol which have a broad range of biological activities acting as antimicrobial compounds, insecticides, antioxidants and pharmaceutical agents. Catalyzes the C2-hydroxylation of gamma-terpinene to produce carvacrol. Mediates also the C6-hydroxylation of (4S)-limonene and (4R)-limonene to form carveol. The protein is Cytochrome P450 71D180 of Thymus vulgaris (Thyme).